The chain runs to 601 residues: Molybdenum cofactor synthesis protein cinnamon (601 aa).

The interval serine 3–valine 153 is MPT adenylyltransferase. The disordered stretch occupies residues serine 173–proline 195. The MPT Mo-transferase stretch occupies residues threonine 184–phenylalanine 596. The residue at position 376 (serine 376) is a Phosphoserine.

This sequence in the N-terminal section; belongs to the MoaB/Mog family. In the C-terminal section; belongs to the MoeA family. Requires Mg(2+) as cofactor.

The catalysed reaction is molybdopterin + ATP + H(+) = adenylyl-molybdopterin + diphosphate. The enzyme catalyses adenylyl-molybdopterin + molybdate = Mo-molybdopterin + AMP + H(+). The protein operates within cofactor biosynthesis; molybdopterin biosynthesis. Its function is as follows. Catalyzes two steps in the biosynthesis of the molybdenum cofactor. In the first step, molybdopterin is adenylated. Subsequently, molybdate is inserted into adenylated molybdopterin and AMP is released. This chain is Molybdenum cofactor synthesis protein cinnamon (cin), found in Drosophila melanogaster (Fruit fly).